We begin with the raw amino-acid sequence, 366 residues long: Probable glucuronokinase 2 (366 aa).

126–136 (PRQTGLSGSSA) is a binding site for ATP. D179 acts as the Proton acceptor in catalysis.

It belongs to the GHMP kinase family. It depends on Mg(2+) as a cofactor. Mn(2+) serves as cofactor. Requires Co(2+) as cofactor.

It carries out the reaction D-glucuronate + ATP = 1-phospho-alpha-D-glucuronate + ADP + H(+). In terms of biological role, sugar-1-kinase with a strict substrate specificity for D-glucuronic acid and ATP. Involved in the biosynthesis of UDP-glucuronic acid (UDP-GlcA), providing nucleotide sugars for cell-wall polymers. May be also involved in a salvage pathway for glucuronic acid. The sequence is that of Probable glucuronokinase 2 (GLCAK2) from Arabidopsis thaliana (Mouse-ear cress).